Reading from the N-terminus, the 73-residue chain is SIFamide-related peptide (73 aa).

The first 23 residues, 1-23 (MVSIRLTFALAIVAIIFAFSVDA), serve as a signal peptide directing secretion. Phenylalanine amide is present on F35. Positions 39 to 73 (SNTMTDYEFTSRALSAICEVASETCTAWMSRQESN) are excised as a propeptide.

Expressed in brain, the retrocerebral complex and in ventral, thoracic and abdominal ganglia (at protein level).

The protein resides in the secreted. This is SIFamide-related peptide from Camponotus floridanus (Florida carpenter ant).